Reading from the N-terminus, the 80-residue chain is Exodeoxyribonuclease 7 small subunit (80 aa).

This sequence belongs to the XseB family. In terms of assembly, heterooligomer composed of large and small subunits.

The protein resides in the cytoplasm. It catalyses the reaction Exonucleolytic cleavage in either 5'- to 3'- or 3'- to 5'-direction to yield nucleoside 5'-phosphates.. In terms of biological role, bidirectionally degrades single-stranded DNA into large acid-insoluble oligonucleotides, which are then degraded further into small acid-soluble oligonucleotides. The chain is Exodeoxyribonuclease 7 small subunit from Shigella sonnei (strain Ss046).